The sequence spans 414 residues: Dimethylsulfoniopropionate lyase DddY (414 aa).

The first 18 residues, 1-18 (MKYMVLFSGLLFSNVLVA), serve as a signal peptide directing secretion.

The protein belongs to the DMSP lyase DddY family.

It is found in the periplasm. The catalysed reaction is S,S-dimethyl-beta-propiothetin = acrylate + dimethyl sulfide + H(+). Functionally, catalyzes the cleavage of dimethylsulfoniopropionate (DMSP) into dimethyl sulfide (DMS) and acrylate. This Shewanella woodyi (strain ATCC 51908 / MS32) protein is Dimethylsulfoniopropionate lyase DddY.